We begin with the raw amino-acid sequence, 359 residues long: Prostaglandin D2 receptor (359 aa).

Over 1–21 (MKSPFYRCQNTTSVEKGNSAV) the chain is Extracellular. Asn-10 carries N-linked (GlcNAc...) asparagine glycosylation. The chain crosses the membrane as a helical span at residues 22–42 (MGGVLFSTGLLGNLLALGLLA). Topologically, residues 43–59 (RSGLGWCSRRPLRPLPS) are cytoplasmic. A helical membrane pass occupies residues 60 to 80 (VFYMLVCGLTVTDLLGKCLLS). Residues 81 to 107 (PVVLAAYAQNRSLRVLAPALDNSLCQA) are Extracellular-facing. Residue Asn-90 is glycosylated (N-linked (GlcNAc...) asparagine). A disulfide bridge links Cys-105 with Cys-183. The helical transmembrane segment at 108-128 (FAFFMSFFGLSSTLQLLAMAL) threads the bilayer. The Cytoplasmic segment spans residues 129-150 (ECWLSLGHPFFYRRHITLRLGA). A helical membrane pass occupies residues 151–171 (LVAPVVSAFSLAFCALPFMGF). Over 172–195 (GKFVQYCPGTWCFIQMVHEEGSLS) the chain is Extracellular. Residues 196-216 (VLGYSVLYSSLMALLVLATVL) form a helical membrane-spanning segment. At 217-262 (CNLGAMRNLYAMHRRLQRHPRSCTRDCAEPRADGREASPQPLEELD) the chain is on the cytoplasmic side. A helical transmembrane segment spans residues 263–283 (HLLLLALMTVLFTMCSLPVIY). Over 284 to 310 (RAYYGAFKDVKEKNRTSEEAEDLRALR) the chain is Extracellular. The N-linked (GlcNAc...) asparagine glycan is linked to Asn-297. A helical membrane pass occupies residues 311 to 331 (FLSVISIVDPWIFIIFRSPVF). Topologically, residues 332 to 359 (RIFFHKIFIRPLRYRSRCSNSTNMESSL) are cytoplasmic.

This sequence belongs to the G-protein coupled receptor 1 family. In terms of tissue distribution, expressed in retinal choroid, ciliary epithelium, longitudinal and circular ciliary muscles, iris, small intestine and platelet membranes.

It is found in the cell membrane. In terms of biological role, receptor for prostaglandin D2 (PGD2). The activity of this receptor is mainly mediated by G(s) proteins that stimulate adenylate cyclase, resulting in an elevation of intracellular cAMP. A mobilization of calcium is also observed, but without formation of inositol 1,4,5-trisphosphate. Involved in PLA2G3-dependent maturation of mast cells. PLA2G3 is secreted by immature mast cells and acts on nearby fibroblasts upstream to PTDGS to synthesize PGD2, which in turn promotes mast cell maturation and degranulation via PTGDR. The chain is Prostaglandin D2 receptor (PTGDR) from Homo sapiens (Human).